The sequence spans 384 residues: Chaperone protein DnaJ (384 aa).

The J domain occupies 5-69; the sequence is DYYKVLGVDR…QKRAQYDQFG (65 aa). Residues 141–223 form a CR-type zinc finger; that stretch reads GKKTQVSYTR…CGGKGTVERK (83 aa). 8 residues coordinate Zn(2+): Cys-154, Cys-157, Cys-171, Cys-174, Cys-197, Cys-200, Cys-211, and Cys-214. 4 CXXCXGXG motif repeats span residues 154–161, 171–178, 197–204, and 211–218; these read CETCGGNG, CDKCHGTG, CDKCNGRG, and CKTCGGKG.

The protein belongs to the DnaJ family. In terms of assembly, homodimer. Zn(2+) serves as cofactor.

Its subcellular location is the cytoplasm. Functionally, participates actively in the response to hyperosmotic and heat shock by preventing the aggregation of stress-denatured proteins and by disaggregating proteins, also in an autonomous, DnaK-independent fashion. Unfolded proteins bind initially to DnaJ; upon interaction with the DnaJ-bound protein, DnaK hydrolyzes its bound ATP, resulting in the formation of a stable complex. GrpE releases ADP from DnaK; ATP binding to DnaK triggers the release of the substrate protein, thus completing the reaction cycle. Several rounds of ATP-dependent interactions between DnaJ, DnaK and GrpE are required for fully efficient folding. Also involved, together with DnaK and GrpE, in the DNA replication of plasmids through activation of initiation proteins. This chain is Chaperone protein DnaJ, found in Lactobacillus acidophilus (strain ATCC 700396 / NCK56 / N2 / NCFM).